The primary structure comprises 181 residues: Thioredoxin M-type, chloroplastic (181 aa).

The N-terminal 67 residues, 1 to 67, are a transit peptide targeting the chloroplast; the sequence is MAIENCLQLS…RQFRYSSVVC (67 aa). The Thioredoxin domain maps to 68–180; the sequence is KASEAVKEVQ…LTDSIEKYLS (113 aa). Active-site nucleophile residues include cysteine 104 and cysteine 107. A disulfide bridge connects residues cysteine 104 and cysteine 107.

The protein belongs to the thioredoxin family. Plant M-type subfamily. In terms of assembly, forms a complex with heterodimeric ferredoxin-thioredoxin reductase (FTR) and ferredoxin.

The protein localises to the plastid. It is found in the chloroplast. Functionally, participates in various redox reactions through the reversible oxidation of the active center dithiol to a disulfide. The M form is known to activate NADP-malate dehydrogenase. The protein is Thioredoxin M-type, chloroplastic of Spinacia oleracea (Spinach).